The following is a 405-amino-acid chain: Glucose-1-phosphate adenylyltransferase (405 aa).

Residues Y99, G164, 179–180 (EK), and S197 contribute to the alpha-D-glucose 1-phosphate site.

Belongs to the bacterial/plant glucose-1-phosphate adenylyltransferase family. In terms of assembly, homotetramer.

The catalysed reaction is alpha-D-glucose 1-phosphate + ATP + H(+) = ADP-alpha-D-glucose + diphosphate. The protein operates within glycan biosynthesis; glycogen biosynthesis. Involved in the biosynthesis of ADP-glucose, a building block required for the elongation reactions to produce glycogen. Catalyzes the reaction between ATP and alpha-D-glucose 1-phosphate (G1P) to produce pyrophosphate and ADP-Glc. This is Glucose-1-phosphate adenylyltransferase from Corynebacterium aurimucosum (strain ATCC 700975 / DSM 44827 / CIP 107346 / CN-1) (Corynebacterium nigricans).